Reading from the N-terminus, the 264-residue chain is Endoglucanase S (264 aa).

Positions 1 to 32 are cleaved as a signal peptide; that stretch reads MQTVNTQPHRIFRVLLPAVFSSLLLSSLTVSA.

The protein belongs to the glycosyl hydrolase 12 (cellulase H) family.

It catalyses the reaction Endohydrolysis of (1-&gt;4)-beta-D-glucosidic linkages in cellulose, lichenin and cereal beta-D-glucans.. The polypeptide is Endoglucanase S (celS) (Pectobacterium parmentieri).